The primary structure comprises 206 residues: Outer-membrane lipoprotein LolB (206 aa).

The signal sequence occupies residues 1 to 18 (MKTFKFLTALFATAILTA). C19 carries the N-palmitoyl cysteine lipid modification. C19 carries the S-diacylglycerol cysteine lipid modification.

Belongs to the LolB family. Monomer.

Its subcellular location is the cell outer membrane. Plays a critical role in the incorporation of lipoproteins in the outer membrane after they are released by the LolA protein. The chain is Outer-membrane lipoprotein LolB from Haemophilus influenzae (strain PittEE).